Here is a 200-residue protein sequence, read N- to C-terminus: dITP/XTP pyrophosphatase (200 aa).

5–10 (TRNEGK) lines the substrate pocket. D67 functions as the Proton acceptor in the catalytic mechanism. Position 67 (D67) interacts with Mg(2+). Substrate contacts are provided by residues S68, 151-154 (FGYD), K174, and 179-180 (HR).

This sequence belongs to the HAM1 NTPase family. As to quaternary structure, homodimer. The cofactor is Mg(2+).

It catalyses the reaction XTP + H2O = XMP + diphosphate + H(+). The enzyme catalyses dITP + H2O = dIMP + diphosphate + H(+). The catalysed reaction is ITP + H2O = IMP + diphosphate + H(+). Its function is as follows. Pyrophosphatase that catalyzes the hydrolysis of nucleoside triphosphates to their monophosphate derivatives, with a high preference for the non-canonical purine nucleotides XTP (xanthosine triphosphate), dITP (deoxyinosine triphosphate) and ITP. Seems to function as a house-cleaning enzyme that removes non-canonical purine nucleotides from the nucleotide pool, thus preventing their incorporation into DNA/RNA and avoiding chromosomal lesions. The chain is dITP/XTP pyrophosphatase from Streptococcus pneumoniae serotype 4 (strain ATCC BAA-334 / TIGR4).